A 67-amino-acid polypeptide reads, in one-letter code: DNA-directed RNA polymerase subunit omega (67 aa).

It belongs to the RNA polymerase subunit omega family. The RNAP catalytic core consists of 2 alpha, 1 beta, 1 beta' and 1 omega subunit. When a sigma factor is associated with the core the holoenzyme is formed, which can initiate transcription.

It catalyses the reaction RNA(n) + a ribonucleoside 5'-triphosphate = RNA(n+1) + diphosphate. Promotes RNA polymerase assembly. Latches the N- and C-terminal regions of the beta' subunit thereby facilitating its interaction with the beta and alpha subunits. The chain is DNA-directed RNA polymerase subunit omega from Dictyoglomus turgidum (strain DSM 6724 / Z-1310).